The following is a 212-amino-acid chain: Vesicle transport protein SFT2C (212 aa).

The Cytoplasmic portion of the chain corresponds to 1-78 (MADLHRQLQD…TRGQRLVAGG (78 aa)). Residues 79 to 99 (LCLLLAALCFGLAALYAPVLL) traverse the membrane as a helical segment. Over 100-104 (LRARK) the chain is Lumenal. A helical membrane pass occupies residues 105–125 (FALLWSLGSVLAWASAALLRG). At 126–142 (GPACGRLLRGEETPSRS) the chain is on the cytoplasmic side. The chain crosses the membrane as a helical span at residues 143–165 (TLGYAAALGATLYAALVLRSTVL). The Lumenal segment spans residues 166 to 174 (TALGACAQV). Residues 175 to 197 (AALLYALIGLLPWGGVTALRLAL) traverse the membrane as a helical segment. The Cytoplasmic portion of the chain corresponds to 198 to 212 (GRLNRGTGLANALPV).

Belongs to the SFT2 family.

It localises to the membrane. Its function is as follows. May be involved in fusion of retrograde transport vesicles derived from an endocytic compartment with the Golgi complex. The protein is Vesicle transport protein SFT2C of Mus musculus (Mouse).